Reading from the N-terminus, the 241-residue chain is Uridylate kinase (241 aa).

ATP-binding positions include 15–18, G58, and R62; that span reads KLSG. UMP is bound by residues D77 and 138 to 145; that span reads TGNPYFTT. Residues T165, Y171, and D174 each coordinate ATP.

The protein belongs to the UMP kinase family. In terms of assembly, homohexamer.

Its subcellular location is the cytoplasm. It carries out the reaction UMP + ATP = UDP + ADP. It participates in pyrimidine metabolism; CTP biosynthesis via de novo pathway; UDP from UMP (UMPK route): step 1/1. With respect to regulation, inhibited by UTP. In terms of biological role, catalyzes the reversible phosphorylation of UMP to UDP. The protein is Uridylate kinase of Desulfotalea psychrophila (strain LSv54 / DSM 12343).